A 187-amino-acid chain; its full sequence is Orotate phosphoribosyltransferase (187 aa).

5-phospho-alpha-D-ribose 1-diphosphate is bound by residues arginine 103, lysine 104, lysine 107, and 129 to 137 (EDVTTSGGS). Orotate is bound by residues threonine 133 and arginine 161.

The protein belongs to the purine/pyrimidine phosphoribosyltransferase family. PyrE subfamily. Homodimer. Mg(2+) is required as a cofactor.

The catalysed reaction is orotidine 5'-phosphate + diphosphate = orotate + 5-phospho-alpha-D-ribose 1-diphosphate. It participates in pyrimidine metabolism; UMP biosynthesis via de novo pathway; UMP from orotate: step 1/2. In terms of biological role, catalyzes the transfer of a ribosyl phosphate group from 5-phosphoribose 1-diphosphate to orotate, leading to the formation of orotidine monophosphate (OMP). The protein is Orotate phosphoribosyltransferase of Methanosarcina acetivorans (strain ATCC 35395 / DSM 2834 / JCM 12185 / C2A).